The sequence spans 160 residues: Protein-export protein SecB (160 aa).

The protein belongs to the SecB family. In terms of assembly, homotetramer, a dimer of dimers. One homotetramer interacts with 1 SecA dimer.

It localises to the cytoplasm. One of the proteins required for the normal export of preproteins out of the cell cytoplasm. It is a molecular chaperone that binds to a subset of precursor proteins, maintaining them in a translocation-competent state. It also specifically binds to its receptor SecA. This is Protein-export protein SecB from Rhizobium johnstonii (strain DSM 114642 / LMG 32736 / 3841) (Rhizobium leguminosarum bv. viciae).